The following is a 99-amino-acid chain: Small integral membrane protein 14 (99 aa).

Residues 1–49 (MAEGGFDPCECICSHEHAMRRLINLLRQSQSYCTDTECLRELPGPSGDS) lie on the Lumenal side of the membrane. Residues 50–70 (GISITVILMAWMVIAVLLFLL) traverse the membrane as a helical segment. The Cytoplasmic segment spans residues 71 to 99 (RPPNLRGSSLPGKPSSPHSGQDPPAPPVD). Residues 77–99 (GSSLPGKPSSPHSGQDPPAPPVD) are disordered.

It localises to the endoplasmic reticulum membrane. This Rattus norvegicus (Rat) protein is Small integral membrane protein 14 (Smim14).